A 450-amino-acid polypeptide reads, in one-letter code: MSMEFDAVIIGGGVSGCATFYTLSEYSSLKRVAIVEKCSKLAQISSSAKANSQTIHDGSIETNYTPEKAKKVRLSAYKTRQYALNKGLQNEVIFETQKMAIGVGDEECEFMKKRYESFKEIFVGLEEFDKQKIKELEPNVILGANGIDRHENIVGHGYQKDWSTMNFAKLSENFVEEALKLRPNNQVFLNFKVKKIEKRNDTYAVISEDAEEVYAKFVLVNAGSYALPLAQSMGYGLDLGCLPVAGSFYFVPDLLKGKVYTVQNPKLPFAAVHGDPDAVIKGKTRIGPTALTMPKLERNKCWLKGISLELLKMDLNKDVFKIAFDLMSDKEIRNYVFKNMVFELPIIGKRKFLKDAQKIIPSLSLEDLEYAHGFGEVRPQVLDRTKRKLELGEKKICTHKGITFNMTPSPGATSCLQNALVDSQEIAAYLGESFELERFYKDLSPEELEN.

It belongs to the MQO family. FAD is required as a cofactor.

It carries out the reaction (S)-malate + a quinone = a quinol + oxaloacetate. It participates in carbohydrate metabolism; tricarboxylic acid cycle; oxaloacetate from (S)-malate (quinone route): step 1/1. The sequence is that of Probable malate:quinone oxidoreductase from Helicobacter pylori (strain P12).